The sequence spans 95 residues: MLHTLHRSPWLADFAALLRLLSEGDELLLLQDGVTAAVDGNRYLESLRNAPIKVYALNEDLIARGLTGQISNDIIPIDYTDFVRLTVKHSSQMAW.

The protein belongs to the DsrH/TusB family. As to quaternary structure, heterohexamer, formed by a dimer of trimers. The hexameric TusBCD complex contains 2 copies each of TusB, TusC and TusD. The TusBCD complex interacts with TusE.

It is found in the cytoplasm. In terms of biological role, part of a sulfur-relay system required for 2-thiolation of 5-methylaminomethyl-2-thiouridine (mnm(5)s(2)U) at tRNA wobble positions. The protein is Protein TusB of Shigella sonnei (strain Ss046).